Consider the following 602-residue polypeptide: Cytokine-like nuclear factor N-PAC (602 aa).

Phosphoserine is present on residues serine 8 and serine 10. A PWWP domain is found at 22 to 81 (PKDLIWAKMKGFTPWPGMIVDPPLDLLSQQRRANTKCVFFFGSRNFAWIEENNIKPFEGP). Residues 162–262 (GSPDEGDGLD…ASSTPTGRRR (101 aa)) form a disordered region. 3 stretches are compositionally biased toward polar residues: residues 176-188 (ADSS…SPAV), 204-217 (AATS…SAKS), and 224-233 (SAQQSPSGPS). Phosphoserine occurs at positions 224, 228, and 243. The tract at residues 309-602 (RDIVPSEQTF…SSAVFVRSRF (294 aa)) is dehydrogenase domain. Residues 319–333 (GFLG…IVKD), threonine 411, and arginine 554 each bind NAD(+).

It belongs to the HIBADH-related family. NP60 subfamily. As to quaternary structure, binds to mononucleosomes. Interacts with male-specific lethal (MSL) histone acetyltransferase complex at least composed of mof, msl-1, msl-2 and msl-3.

The protein localises to the chromosome. Its function is as follows. Nucleosome-destabilizing factor that is recruited to genes during transcriptional activation and colocalizes with a subset of trimethylated 'Lys-36' histone H3 (H3K36me3)-enriched regions. Binds DNA (in vitro). Facilitates Pol II transcription through nucleosomes. Facilitates male-specific lethal (MSL) histone acetyltransferase complex targeting to active genes on the X chromosome. Stimulates the acetylation of 'Lys-56' of nucleosomal histone H3 (H3K56ac) by nej. May have oxidoreductase activity. The sequence is that of Cytokine-like nuclear factor N-PAC from Drosophila melanogaster (Fruit fly).